The primary structure comprises 106 residues: Pyrimidine/purine nucleoside phosphorylase (106 aa).

Belongs to the nucleoside phosphorylase PpnP family.

The enzyme catalyses a purine D-ribonucleoside + phosphate = a purine nucleobase + alpha-D-ribose 1-phosphate. It catalyses the reaction adenosine + phosphate = alpha-D-ribose 1-phosphate + adenine. It carries out the reaction cytidine + phosphate = cytosine + alpha-D-ribose 1-phosphate. The catalysed reaction is guanosine + phosphate = alpha-D-ribose 1-phosphate + guanine. The enzyme catalyses inosine + phosphate = alpha-D-ribose 1-phosphate + hypoxanthine. It catalyses the reaction thymidine + phosphate = 2-deoxy-alpha-D-ribose 1-phosphate + thymine. It carries out the reaction uridine + phosphate = alpha-D-ribose 1-phosphate + uracil. The catalysed reaction is xanthosine + phosphate = alpha-D-ribose 1-phosphate + xanthine. Catalyzes the phosphorolysis of diverse nucleosides, yielding D-ribose 1-phosphate and the respective free bases. Can use uridine, adenosine, guanosine, cytidine, thymidine, inosine and xanthosine as substrates. Also catalyzes the reverse reactions. This Paraburkholderia xenovorans (strain LB400) protein is Pyrimidine/purine nucleoside phosphorylase.